We begin with the raw amino-acid sequence, 807 residues long: cAMP-regulated phosphoprotein 21 (807 aa).

A disordered region spans residues 1–127; that stretch reads MSEQGGLTPT…KNREKLSERP (127 aa). Serine 2 is subject to N-acetylserine. Position 32 is a phosphoserine (serine 32). The stretch at 32–57 forms a coiled coil; the sequence is SLDEEEKLELQRRLAAQNQERRKSKS. A Phosphoserine; by PKA modification is found at serine 55. Residues 89–98 are compositionally biased toward polar residues; sequence IHLQLSSFPS. Residues 101-127 show a composition bias toward basic and acidic residues; the sequence is EEDKSRKDDSEREKEKDKNREKLSERP. Serine 133 is subject to Phosphoserine. In terms of domain architecture, R3H spans 163–226; sequence RMILLKMEQE…SVIINKTSST (64 aa). In terms of domain architecture, SUZ spans 227-298; the sequence is RIPEQRFCEH…VRERIFAHDS (72 aa). Positions 245–282 are disordered; it reads SQKRFILKRDNSSIDKEDNQNRMHPFRDDRRSKSIEER. 2 positions are modified to phosphoserine: asparagine 265 and serine 298. 4 disordered regions span residues 328–434, 474–536, 552–576, and 595–627; these read LFRA…TSSV, GSIL…QPQM, SQLS…YPAS, and QLST…QQPP. Over residues 337–348 the composition is skewed to low complexity; that stretch reads GRTSGSRQSSSE. Over residues 349 to 358 the composition is skewed to basic and acidic residues; it reads TELRWPDHQR. Polar residues predominate over residues 359-380; that stretch reads AWSSTDSDSSNRNLKPTMTKTA. Serine 361 and serine 381 each carry phosphoserine. Positions 401 to 421 are enriched in low complexity; sequence GKLSKTGSESSSSAGSSGSLS. The span at 422 to 434 shows a compositional bias: polar residues; the sequence is RTHPQSTALTSSV. Residues 514 to 524 show a composition bias toward pro residues; the sequence is QQPPQQQPSPQ. Positions 525 to 535 are enriched in low complexity; that stretch reads PQQQVQASQPQ. Composition is skewed to polar residues over residues 552 to 563 and 595 to 613; these read SQLSMSRQSSGD and QLST…QQVL. At serine 557 the chain carries Phosphoserine. The residue at position 650 (arginine 650) is an Asymmetric dimethylarginine.

In terms of assembly, interacts with CALM1. Post-translationally, phosphorylation of isoform 2 at Ser-55 is enhanced upon dopamine D1 receptor activation and favors interaction with CALM1. Methylated by CARM1 at Arg-650 in immature thymocytes. As to expression, present at high levels in thymus and low levels in brain. In thymus, isoform 1 is specifically found in immature thymocytes (at protein level).

It is found in the cytoplasm. Functionally, may act as a competitive inhibitor of calmodulin-dependent enzymes such as calcineurin in neurons. This is cAMP-regulated phosphoprotein 21 (Arpp21) from Mus musculus (Mouse).